Here is a 382-residue protein sequence, read N- to C-terminus: Inactive anthranilate O-methyltransferase 1 (382 aa).

Tyrosine 20, cysteine 61, asparagine 66, aspartate 102, leucine 103, serine 146, and tyrosine 147 together coordinate S-adenosyl-L-homocysteine. Mg(2+) contacts are provided by glutamate 268 and phenylalanine 270.

It belongs to the methyltransferase superfamily. Type-7 methyltransferase family. SABATH subfamily.

This Zea mays (Maize) protein is Inactive anthranilate O-methyltransferase 1 (AAMT1I).